Consider the following 20-residue polypeptide: Cruzioseptin-15 (20 aa).

Expressed by the skin glands.

It is found in the secreted. In terms of biological role, has antimicrobial activity. The polypeptide is Cruzioseptin-15 (Cruziohyla calcarifer (Splendid leaf frog)).